A 531-amino-acid chain; its full sequence is CTP synthase (531 aa).

Positions Met1–Leu264 are amidoligase domain. CTP is bound at residue Ser13. Ser13 contacts UTP. Gly14–Val19 is a binding site for ATP. Tyr54 serves as a coordination point for L-glutamine. Asp71 is an ATP binding site. Asp71 and Glu139 together coordinate Mg(2+). Residues Asp146–Glu148, Lys185–Gln190, and Lys221 contribute to the CTP site. Residues Lys185–Gln190 and Lys221 each bind UTP. One can recognise a Glutamine amidotransferase type-1 domain in the interval Cys293–Arg531. Gly351 is a binding site for L-glutamine. Catalysis depends on Cys378, which acts as the Nucleophile; for glutamine hydrolysis. L-glutamine is bound by residues Phe379–Gln382, Glu402, and Arg459. Active-site residues include His504 and Glu506.

Belongs to the CTP synthase family. In terms of assembly, homotetramer.

The catalysed reaction is UTP + L-glutamine + ATP + H2O = CTP + L-glutamate + ADP + phosphate + 2 H(+). The enzyme catalyses L-glutamine + H2O = L-glutamate + NH4(+). It carries out the reaction UTP + NH4(+) + ATP = CTP + ADP + phosphate + 2 H(+). The protein operates within pyrimidine metabolism; CTP biosynthesis via de novo pathway; CTP from UDP: step 2/2. With respect to regulation, allosterically activated by GTP, when glutamine is the substrate; GTP has no effect on the reaction when ammonia is the substrate. The allosteric effector GTP functions by stabilizing the protein conformation that binds the tetrahedral intermediate(s) formed during glutamine hydrolysis. Inhibited by the product CTP, via allosteric rather than competitive inhibition. In terms of biological role, catalyzes the ATP-dependent amination of UTP to CTP with either L-glutamine or ammonia as the source of nitrogen. Regulates intracellular CTP levels through interactions with the four ribonucleotide triphosphates. This Pyrobaculum calidifontis (strain DSM 21063 / JCM 11548 / VA1) protein is CTP synthase.